Reading from the N-terminus, the 262-residue chain is Oxidoreductase AgnL4 (262 aa).

The protein belongs to the avfA family.

The protein operates within secondary metabolite biosynthesis. Its function is as follows. Oxidoreductase; part of the gene cluster that mediates the biosynthesis of agnestins, dihydroxy-xanthone metabolites. The pathway begins with the assembly and cyclization of atrochrysone thioester by the non-reducing polyketide synthase Agnpks1. The atrochrysone carboxyl ACP thioesterase AgnL7 then breaks the thioester bond and releases the atrochrysone carboxylic acid as the first enzyme-free intermediate. The decarboxylase AgnL1 then catalyzes the concerted decarboxylation-elimination required to convert atochrysone carboxylic acid into emodin anthrone, which is further oxidized to emodin by the anthrone oxygenase AgnL2. Emodin then undergoes reduction catalyzed by the oxidoreductase AgnL4 to yield the dihydroquinone tautomer which is the substrate for reduction by the short chain dehydrogenase AgnL6 reduction to produce hydroxyketone, followed by AgnL8 dehydration and likely spontaneous autoxidation to chrysophanol. Baeyer-Villiger oxidation by the oxidase AgnL3 leads to monodictyphenone via cleavage of the C-10/C-10a bond of chrysophanol. Alternative cleavage at the C-4a/C-10 bond of chrysophanol also leads to the formation some cephalone F. Further conversion to agnestins A and B, requires reduction to dihydro-monodictyphenone, oxidation to agnestin C probably via an epoxide, and rearrangement to either agnestin A or agnestin B directly, although agnestin A or agnestin B can also interconvert. Within the cluster, AgnR1 is the only unassigned oxidoreductase present which could be involved in this conversion. However, AgnR1 seems not to be involved in this step, and thus genes involved in the proposed oxidation/reduction may be located elsewhere on the genome. Further agnestin A derivatives are probably formed by spontaneous decarboxylations, dehydrations and methanolysis reactions. In Paecilomyces divaricatus (Penicillium divaricatum), this protein is Oxidoreductase AgnL4.